Reading from the N-terminus, the 346-residue chain is UDP-N-acetylenolpyruvoylglucosamine reductase (346 aa).

The FAD-binding PCMH-type domain maps to 23–194; sequence FDVRAQFACR…TSVTFRLPKV (172 aa). The active site involves arginine 170. The Proton donor role is filled by serine 246. The active site involves glutamate 342.

This sequence belongs to the MurB family. It depends on FAD as a cofactor.

Its subcellular location is the cytoplasm. It catalyses the reaction UDP-N-acetyl-alpha-D-muramate + NADP(+) = UDP-N-acetyl-3-O-(1-carboxyvinyl)-alpha-D-glucosamine + NADPH + H(+). The protein operates within cell wall biogenesis; peptidoglycan biosynthesis. In terms of biological role, cell wall formation. In Paraburkholderia phytofirmans (strain DSM 17436 / LMG 22146 / PsJN) (Burkholderia phytofirmans), this protein is UDP-N-acetylenolpyruvoylglucosamine reductase.